The chain runs to 499 residues: MAEPSAGRQKVVIVGAGPVGSLAALYAAARGDDVEMYELRGDLRDPNTIPLNFTKSINLALSERGITAMRQANREELIDRVLADAIPMHGRMIHGRSDGKLWEAAQTYDVHGRAINAVDRGTLNNALLDELSRTPNVKMFFNHKLTGADFRTNRAWLERRTPGTASTPESVTEIEITFDYLIGADGAHSASRYHMMKFARVDYQQEYIDALWCEFRIPPSPETGDFQISPNHLHIWPGKEFMFIALPSADKSFTCTLFAPAWHYEKLEKSSPQDLVTSFDYNFPGVCPNLITPEALAEQFTENPHLPLISLKCKPHHFGSSVVIVGDAAHAVLPFYGQGLNAGLEDIPVLFSFMDQYGVYDDSISPTPEARASARAAALQAYTNQRTADTWAINDLSKQNYLEMRWGVKSPVYKLRKMVEETLDHYVPSLGWQTQYSRVSFSNQRYSEVIASVKRQGKLLGVAGLSSVLVSVMIGAGVLMRWPERLSLGAVWRTVFGRN.

It belongs to the aromatic-ring hydroxylase family. KMO subfamily. It depends on FAD as a cofactor.

It is found in the mitochondrion outer membrane. The enzyme catalyses L-kynurenine + NADPH + O2 + H(+) = 3-hydroxy-L-kynurenine + NADP(+) + H2O. Its pathway is cofactor biosynthesis; NAD(+) biosynthesis; quinolinate from L-kynurenine: step 1/3. In terms of biological role, catalyzes the hydroxylation of L-kynurenine (L-Kyn) to form 3-hydroxy-L-kynurenine (L-3OHKyn). Required for synthesis of quinolinic acid. This is Kynurenine 3-monooxygenase 3 (bna4-3) from Aspergillus niger (strain ATCC MYA-4892 / CBS 513.88 / FGSC A1513).